The sequence spans 89 residues: Protein RALF-like 5 (89 aa).

Positions Met-1–Ala-25 are cleaved as a signal peptide. Intrachain disulfides connect Cys-39/Cys-48 and Cys-61/Cys-67.

The protein belongs to the plant rapid alkalinization factor (RALF) family.

It is found in the secreted. In terms of biological role, cell signaling peptide that may regulate plant stress, growth, and development. Mediates a rapid alkalinization of extracellular space by mediating a transient increase in the cytoplasmic Ca(2+) concentration leading to a calcium-dependent signaling events through a cell surface receptor and a concomitant activation of some intracellular mitogen-activated protein kinases. The chain is Protein RALF-like 5 (RALFL5) from Arabidopsis thaliana (Mouse-ear cress).